A 158-amino-acid polypeptide reads, in one-letter code: 6,7-dimethyl-8-ribityllumazine synthase (158 aa).

Residues Phe23, 61-63 (SFE), and 85-87 (AVI) contribute to the 5-amino-6-(D-ribitylamino)uracil site. (2S)-2-hydroxy-3-oxobutyl phosphate is bound at residue 90–91 (DT). The Proton donor role is filled by His93. Phe118 serves as a coordination point for 5-amino-6-(D-ribitylamino)uracil. (2S)-2-hydroxy-3-oxobutyl phosphate is bound at residue Arg132.

Belongs to the DMRL synthase family.

The enzyme catalyses (2S)-2-hydroxy-3-oxobutyl phosphate + 5-amino-6-(D-ribitylamino)uracil = 6,7-dimethyl-8-(1-D-ribityl)lumazine + phosphate + 2 H2O + H(+). It participates in cofactor biosynthesis; riboflavin biosynthesis; riboflavin from 2-hydroxy-3-oxobutyl phosphate and 5-amino-6-(D-ribitylamino)uracil: step 1/2. Catalyzes the formation of 6,7-dimethyl-8-ribityllumazine by condensation of 5-amino-6-(D-ribitylamino)uracil with 3,4-dihydroxy-2-butanone 4-phosphate. This is the penultimate step in the biosynthesis of riboflavin. This chain is 6,7-dimethyl-8-ribityllumazine synthase, found in Prochlorococcus marinus (strain NATL1A).